Here is a 95-residue protein sequence, read N- to C-terminus: MRTIFLLTLLTLAALCLSDLTDAKPSGPESDKAFMSKQEGNKVVNRLRRYLGASVPSPDPLEPTREQCELNPACDELSDQYGLKTAYKRIYGITI.

The first 23 residues, 1–23, serve as a signal peptide directing secretion; it reads MRTIFLLTLLTLAALCLSDLTDA. The propeptide occupies 24 to 49; the sequence is KPSGPESDKAFMSKQEGNKVVNRLRR. Residues 46–92 form the Gla domain; that stretch reads RLRRYLGASVPSPDPLEPTREQCELNPACDELSDQYGLKTAYKRIYG. 4 residues coordinate Ca(2+): E62, E66, E69, and D75. E62, E66, and E69 each carry 4-carboxyglutamate. The cysteines at positions 68 and 74 are disulfide-linked.

It belongs to the osteocalcin/matrix Gla protein family. In terms of processing, gamma-carboxyglutamate residues are formed by vitamin K dependent carboxylation by GGCX. These residues are essential for the binding of calcium. Carboxylated in a Ptprv/Esp-dependent process. Decarboxylation promotes the hormone activity. As to expression, bone.

It localises to the secreted. Its function is as follows. The carboxylated form is one of the main organic components of the bone matrix, which constitutes 1-2% of the total bone protein: it acts as a negative regulator of bone formation and is required to limit bone formation without impairing bone resorption or mineralization. The carboxylated form binds strongly to apatite and calcium. The uncarboxylated form acts as a hormone secreted by osteoblasts, which regulates different cellular processes, such as energy metabolism, male fertility and brain development. Regulates of energy metabolism by acting as a hormone favoring pancreatic beta-cell proliferation, insulin secretion and sensitivity and energy expenditure. Uncarboxylated osteocalcin hormone also promotes testosterone production in the testes: acts as a ligand for G protein-coupled receptor GPRC6A at the surface of Leydig cells, initiating a signaling response that promotes the expression of enzymes required for testosterone synthesis in a CREB-dependent manner. Also acts as a regulator of brain development: osteocalcin hormone crosses the blood-brain barrier and acts as a ligand for GPR158 on neurons, initiating a signaling response that prevents neuronal apoptosis in the hippocampus, favors the synthesis of all monoamine neurotransmitters and inhibits that of gamma-aminobutyric acid (GABA). Osteocalcin also crosses the placenta during pregnancy and maternal osteocalcin is required for fetal brain development. This Mus musculus (Mouse) protein is Osteocalcin.